The sequence spans 454 residues: Epoxide hydrolase 1 (454 aa).

The helical transmembrane segment at Met1 to Lys21 threads the bilayer. At Asp22–Gln454 the chain is on the cytoplasmic side. Asp226 serves as the catalytic Nucleophile. Arg294 bears the Dimethylated arginine mark. The active-site Proton donor is Tyr373. The active-site Proton acceptor is the His430.

The protein belongs to the peptidase S33 family.

The protein resides in the microsome membrane. It is found in the endoplasmic reticulum membrane. It catalyses the reaction cis-stilbene oxide + H2O = (1R,2R)-hydrobenzoin. The enzyme catalyses 1-(4-methoxyphenyl)-N-methyl-N-[(3-methyloxetan-3-yl)methyl]methanamine + H2O = 2-{[(4-methoxybenzyl)(methyl)amino]methyl}-2-methylpropane-1,3-diol. It carries out the reaction 8,9-epoxy-(5Z,11Z,14Z)-eicosatrienoate + H2O = 8,9-dihydroxy-(5Z,11Z,14Z)-eicosatrienoate. The catalysed reaction is 11,12-epoxy-(5Z,8Z,14Z)-eicosatrienoate + H2O = 11,12-dihydroxy-(5Z,8Z,14Z)-eicosatrienoate. It catalyses the reaction 2-(5Z,8Z,11Z,14Z-eicosatetraenoyl)-glycerol + H2O = glycerol + (5Z,8Z,11Z,14Z)-eicosatetraenoate + H(+). Its activity is regulated as follows. Inhibited by 10-hydroxystearamide and methoxy-arachidonyl fluorophosphate. Biotransformation enzyme that catalyzes the hydrolysis of arene and aliphatic epoxides to less reactive and more water soluble dihydrodiols by the trans addition of water. May play a role in the metabolism of endogenous lipids such as epoxide-containing fatty acids. Metabolizes the abundant endocannabinoid 2-arachidonoylglycerol (2-AG) to free arachidonic acid (AA) and glycerol. Binds 20(S)-hydroxycholesterol (20(S)-OHC). This Sus scrofa (Pig) protein is Epoxide hydrolase 1 (EPHX1).